The chain runs to 134 residues: Cytochrome b5 (134 aa).

Residue Ala-2 is modified to N-acetylalanine. 3 positions are modified to N6-acetyllysine: Lys-7, Lys-10, and Lys-19. The region spanning 9–85 (VKYYTLEEIQ…SKTYIIGELH (77 aa)) is the Cytochrome b5 heme-binding domain. 2 residues coordinate heme: His-44 and His-68. The chain crosses the membrane as a helical span at residues 109-131 (WWTNWVIPAISALVVALMYRLYM).

Belongs to the cytochrome b5 family.

The protein resides in the endoplasmic reticulum membrane. Its subcellular location is the microsome membrane. Functionally, cytochrome b5 is a membrane-bound hemoprotein functioning as an electron carrier for several membrane-bound oxygenases. It is also involved in several steps of the sterol biosynthesis pathway, particularly in the C-6 double bond introduction during the C-6 desaturation. The protein is Cytochrome b5 (Cyb5a) of Rattus norvegicus (Rat).